A 412-amino-acid chain; its full sequence is 1-deoxy-D-xylulose 5-phosphate reductoisomerase (412 aa).

Thr10, Gly11, Ser12, Ile13, Gly36, Lys37, Asn38, and Asn130 together coordinate NADPH. Residue Lys131 coordinates 1-deoxy-D-xylulose 5-phosphate. Residue Glu132 coordinates NADPH. Residue Asp156 participates in Mn(2+) binding. 4 residues coordinate 1-deoxy-D-xylulose 5-phosphate: Ser157, Glu158, Ser194, and His217. Glu158 contributes to the Mn(2+) binding site. Gly223 is a binding site for NADPH. The 1-deoxy-D-xylulose 5-phosphate site is built by Ser230, Asn235, Lys236, and Glu239. Glu239 is a binding site for Mn(2+).

It belongs to the DXR family. The cofactor is Mg(2+). Mn(2+) serves as cofactor.

It carries out the reaction 2-C-methyl-D-erythritol 4-phosphate + NADP(+) = 1-deoxy-D-xylulose 5-phosphate + NADPH + H(+). It participates in isoprenoid biosynthesis; isopentenyl diphosphate biosynthesis via DXP pathway; isopentenyl diphosphate from 1-deoxy-D-xylulose 5-phosphate: step 1/6. In terms of biological role, catalyzes the NADPH-dependent rearrangement and reduction of 1-deoxy-D-xylulose-5-phosphate (DXP) to 2-C-methyl-D-erythritol 4-phosphate (MEP). This Prochlorococcus marinus (strain NATL1A) protein is 1-deoxy-D-xylulose 5-phosphate reductoisomerase.